The chain runs to 506 residues: MVVRDYNTELTYIERISTNSFRIKKGFQPNMNVEGIFYANSRLEKLMFDELRNSCRPGMTGGFLPGVKQIANVAALPGIVGRSVGLPDIHSGYGFAIGNMAAFDMSDPTSIVSPGGVGFDINCGVRLLRTNLFEKDVKPVQEQLAQSLFDHIPVGVGSKGIIPMNAHDLEEALEMGMDWSLREGYVWAEDKEHCEEYGRMLTADPSKVSMRAKKRGLPQLGTLGAGNHYAEIQVVEEIYDKYAASKMGIEELGQICVMIHSGSRGFGHQVATDALVEMEKAMKRDKIETNDRQLACARINSVEGQNYLKAMSAAANFAWVNRSSMTFLTRQAFAKQFNTTPDDLDMHVIYDVSHNVAKIEEHIVDGRPKQLLVHRKGSTRAFPPHHPLIPVDYQLTGQPVLVGGSMGTCSFVLTGTEKGMAETFGSTCHGAGRSLSRAKSRRNLDYKDVLRDLEAKGISIRVASPKLVQEEAPDSYKDVRDVVQTCHDVGISSKCIKLRPIAVIKG.

Mn(2+)-binding residues include Asp120, Cys123, His228, His260, and His354. Asn227–Glu231 lines the GMP pocket. GMP is bound by residues His354–Asn355, Gly403–Met406, Ser410, His429–Gly432, and Lys505. His429 acts as the GMP-histidine intermediate in catalysis.

The protein belongs to the RtcB family. Catalytic component of the tRNA-splicing ligase complex. Requires Mn(2+) as cofactor.

It carries out the reaction a 3'-end 3'-phospho-ribonucleotide-RNA + a 5'-end dephospho-ribonucleoside-RNA + GTP = a ribonucleotidyl-ribonucleotide-RNA + GMP + diphosphate. The enzyme catalyses a 3'-end 2',3'-cyclophospho-ribonucleotide-RNA + a 5'-end dephospho-ribonucleoside-RNA + GTP + H2O = a ribonucleotidyl-ribonucleotide-RNA + GMP + diphosphate + H(+). Functionally, catalytic subunit of the tRNA-splicing ligase complex that acts by directly joining spliced tRNA halves to mature-sized tRNAs by incorporating the precursor-derived splice junction phosphate into the mature tRNA as a canonical 3',5'-phosphodiester. May act as an RNA ligase with broad substrate specificity, and may function toward other RNAs. The polypeptide is RNA-splicing ligase RtcB homolog 1 (Culex quinquefasciatus (Southern house mosquito)).